Consider the following 855-residue polypeptide: E3 ubiquitin-protein ligase TRIM71 (855 aa).

The residue at position 2 (alanine 2) is an N-acetylalanine. The RING-type zinc-finger motif lies at 12–94 (CLLCKEMCGS…ALKLRCPVCD (83 aa)). The span at 26 to 42 (SSSSSASSSSSQTSTSS) shows a compositional bias: low complexity. 2 disordered regions span residues 26-48 (SSSSSASSSSSQTSTSSAGGGGP) and 126-177 (ADEP…SPGS). Residues 135–145 (RAGGGPGGAGG) show a composition bias toward gly residues. Basic residues predominate over residues 147-157 (SNHRHHAHHPA). A B box-type 1; atypical zinc finger spans residues 181–228 (RRPHGCSSCDEGNAASSRCLDCQEHLCDNCVRAHQRVRLTKDHYIERG). The B box-type 2 zinc finger occupies 260-301 (ERLGFCQHHDDEVLHLYCDTCSVPICRECTLGRHGGHSFAYL). The Zn(2+) site is built by cysteine 265, histidine 268, cysteine 288, and histidine 293. A coiled-coil region spans residues 378–414 (QVKAKSLYLQVEKLRQNLNKLESTISAVQQVLEEGRA). The stretch at 466–567 (SSGAFAPLTK…IENSPFKVVV (102 aa)) is one Filamin repeat. NHL repeat units lie at residues 580–623 (VLSF…FKPC), 627–670 (HHKF…FTFE), 674–717 (LLKF…FGPD), 721–764 (LNKY…IHPD), 768–811 (ARFL…FEAN), and 815–855 (LCKF…ILIF).

Belongs to the TRIM/RBCC family. In terms of assembly, interacts (via NHL repeats) with AGO2; the interaction increases in presence of RNA. Interacts with HSP90AA1. Interacts (via NHL repeats) with MOV10, PABPC1, PUM1, PUM2, STAU2, XRN1 and XRN2 in an RNA-dependent manner. Interacts with SHCBP1; leading to enhance its stability. Autoubiquitinated.

The protein localises to the cytoplasm. It localises to the P-body. The enzyme catalyses S-ubiquitinyl-[E2 ubiquitin-conjugating enzyme]-L-cysteine + [acceptor protein]-L-lysine = [E2 ubiquitin-conjugating enzyme]-L-cysteine + N(6)-ubiquitinyl-[acceptor protein]-L-lysine.. It functions in the pathway protein modification; protein ubiquitination. E3 ubiquitin-protein ligase that cooperates with the microRNAs (miRNAs) machinery and promotes embryonic stem cells proliferation and maintenance. Binds to miRNAs and associates with AGO2, participating in post-transcriptional repression of transcripts such as CDKN1A. In addition, participates in post-transcriptional mRNA repression in a miRNA independent mechanism. Facilitates the G1-S transition to promote rapid embryonic stem cell self-renewal by repressing CDKN1A expression. Required to maintain proliferation and prevent premature differentiation of neural progenitor cells during early neural development: positively regulates FGF signaling by controlling the stability of SHCBP1. Specific regulator of miRNA biogenesis. Binds to miRNA MIR29A hairpin and postranscriptionally modulates MIR29A levels, which indirectly regulates TET proteins expression. This Rattus norvegicus (Rat) protein is E3 ubiquitin-protein ligase TRIM71 (Trim71).